The primary structure comprises 663 residues: Forkhead protein sep1 (663 aa).

The segment at residues 128–222 is a DNA-binding region (fork-head); the sequence is KPPYSYAMLI…LKLKLRKPGV (95 aa). 2 disordered regions span residues 220–241 and 325–387; these read PGVN…KYGS and SPLQ…DVET. Residues 340–355 are compositionally biased toward low complexity; the sequence is SPASSASPSESLRNES. The residue at position 446 (Ser-446) is a Phosphoserine.

It localises to the nucleus. Required for promoter sequence element PCB-driven, M-phase-specific transcription. Acts as a transcriptional activator with a role in the regulation of mitosis. Regulates septation and the periodic transcription of cdc15. The protein is Forkhead protein sep1 (sep1) of Schizosaccharomyces pombe (strain 972 / ATCC 24843) (Fission yeast).